The primary structure comprises 275 residues: Glucan endo-1,3-beta-glucosidase, acidic isoform PR-N (275 aa).

The Nucleophile role is filled by Glu-196.

It belongs to the glycosyl hydrolase 17 family. The N-terminus is blocked.

It is found in the secreted. The protein resides in the extracellular space. The catalysed reaction is Hydrolysis of (1-&gt;3)-beta-D-glucosidic linkages in (1-&gt;3)-beta-D-glucans.. In terms of biological role, implicated in the defense of plants against pathogens. The chain is Glucan endo-1,3-beta-glucosidase, acidic isoform PR-N (PRN) from Nicotiana tabacum (Common tobacco).